Reading from the N-terminus, the 242-residue chain is MGRGPSIEGRKNASDAKRGKMFTKIIREISVAARAGGGDPSNNPRLRTAMDKGLSANMSKDVIERAIKKSTGELEGVEYEEVRYEGYAPGGVAVIVDCLTDNRVRTVADVRHAFSKCGGNMGTEGSVAFMFKRLGVLSFAAGIDEDTLTDAAIEAGADDVVVYPEDGAIDVLTAPDAFAQVRDALAAAGLEPAHAEIVFRADNDIAVDGDTAVQVRKLLDMLEDLDDVQDVYSNVDQAALGA.

Belongs to the TACO1 family.

It localises to the cytoplasm. This chain is Probable transcriptional regulatory protein XOO1543, found in Xanthomonas oryzae pv. oryzae (strain MAFF 311018).